Here is a 439-residue protein sequence, read N- to C-terminus: Leukocyte immunoglobulin-like receptor subfamily A member 3 (439 aa).

An N-terminal signal peptide occupies residues 1–23 (MTPILTVLICLGLSLDPRTHVQA). Ig-like C2-type domains follow at residues 27 to 108 (PKPT…AGLS), 119 to 224 (TGAY…GVSK), 226 to 315 (PSLS…DPLD), and 326 to 415 (PFLS…SDPL). Cysteine 49 and cysteine 98 form a disulfide bridge. N-linked (GlcNAc...) asparagine glycosylation is present at asparagine 140. Disulfide bonds link cysteine 145–cysteine 197, cysteine 157–cysteine 167, and cysteine 246–cysteine 297. Residues asparagine 281, asparagine 302, and asparagine 341 are each glycosylated (N-linked (GlcNAc...) asparagine). An intrachain disulfide couples cysteine 346 to cysteine 397. The N-linked (GlcNAc...) asparagine glycan is linked to asparagine 431.

In terms of processing, N-glycosylation is required for ligand binding. Detected in B-cells, and at lower levels in natural killer (NK) cells. Detected in peripheral blood monocytes and lung.

The protein localises to the secreted. In terms of biological role, acts as a soluble receptor for class I MHC antigens. Binds both classical and non-classical HLA class I molecules but with reduced affinities compared to LILRB1 or LILRB2. Binds with high affinity to the surface of monocytes, leading to abolish LPS-induced TNF-alpha production by monocytes. This chain is Leukocyte immunoglobulin-like receptor subfamily A member 3 (LILRA3), found in Homo sapiens (Human).